A 212-amino-acid polypeptide reads, in one-letter code: Thymidylate kinase (212 aa).

Glycine 10–threonine 17 is a binding site for ATP.

The protein belongs to the thymidylate kinase family.

The enzyme catalyses dTMP + ATP = dTDP + ADP. Its function is as follows. Phosphorylation of dTMP to form dTDP in both de novo and salvage pathways of dTTP synthesis. The sequence is that of Thymidylate kinase from Serratia proteamaculans (strain 568).